The sequence spans 345 residues: MAASDEVNLIESRTVVPLNTWVLISNFKVAYNILRRPDGTFNRHLAEYLDRKVTANANPVDGVFSFDVLIDRRINLLSRVYRPAYADQEQPPSILDLEKPVDGDIVPVILFFHGGSFAHSSANSAIYDTLCRRLVGLCKCVVVSVNYRRAPENPYPCAYDDGWIALNWVNSRSWLKSKKDSKVHIFLAGDSSGGNIAHNVALRAGESGIDVLGNILLNPMFGGNERTESEKSLDGKYFVTVRDRDWYWKAFLPEGEDREHPACNPFSPRGKSLEGVSFPKSLVVVAGLDLIRDWQLAYAEGLKKAGQEVKLMHLEKATVGFYLLPNNNHFHNVMDEISAFVNAEC.

A2 bears the N-acetylalanine mark. The Involved in the stabilization of the negatively charged intermediate by the formation of the oxyanion hole motif lies at 113–115; sequence HGG. Residues 115–116, Y127, and S191 each bind gibberellin A4; that span reads GS. S116, Y127, S191, and F238 together coordinate gibberellin A3. S191 is an active-site residue. Residue D289 is part of the active site. G320 provides a ligand contact to gibberellin A4. G320 contributes to the gibberellin A3 binding site.

This sequence belongs to the 'GDXG' lipolytic enzyme family. In terms of assembly, interacts (via N-terminus) with the DELLA proteins GAI, RGA, RGL1, RGL2 and RGL3 (via N-terminus) in a GA-dependent manner. As to expression, widely expressed.

It is found in the nucleus. Functionally, functions as a soluble gibberellin (GA) receptor. GA is an essential hormone that regulates growth and development in plants. Binds with high affinity the biologically active gibberellin GA4, but has no affinity for the biologically inactive GAs. In response to GA, interacts with specific DELLA proteins, known as repressors of GA-induced growth, and targets them for degradation via proteasome. Seems to be required for GA signaling that controls root growth, seed germination, stem elongation and flower development. Partially redundant with GID1B and GID1C. This is Gibberellin receptor GID1A (GID1A) from Arabidopsis thaliana (Mouse-ear cress).